The chain runs to 137 residues: Ribosome-binding factor A (137 aa).

The disordered stretch occupies residues 110-137; the sequence is RIQQEKEGATDDRDQNDSGEDATPHSND. The segment covering 112 to 125 has biased composition (basic and acidic residues); it reads QQEKEGATDDRDQN.

This sequence belongs to the RbfA family. In terms of assembly, monomer. Binds 30S ribosomal subunits, but not 50S ribosomal subunits or 70S ribosomes.

The protein resides in the cytoplasm. One of several proteins that assist in the late maturation steps of the functional core of the 30S ribosomal subunit. Associates with free 30S ribosomal subunits (but not with 30S subunits that are part of 70S ribosomes or polysomes). Required for efficient processing of 16S rRNA. May interact with the 5'-terminal helix region of 16S rRNA. The polypeptide is Ribosome-binding factor A (Rhodopirellula baltica (strain DSM 10527 / NCIMB 13988 / SH1)).